Reading from the N-terminus, the 384-residue chain is MSWQEKINAALDARRAADALRRRYPVAQGAGRWLVADDRQYLNFSSNDYLGLSHHPQIIRAWKQGAEQFGIGSGGSGHVSGYSVVHQALEEELAEWLGYSRALLFISGFAANQAVIAAMMAKEDRIVADRLSHASLLEAASLSPSQLRRFTHNDVAHLARLLASPCPGQQLVVTEGVFSMDGDSAPLAEIQQVTQQHNGWLMVDDAHGTGVIGEQGRGSCWLQKVKPELLVVTFGKGFGVSGAAVLCSSTVADYLLQFARHLIYSTSMPPAQAQALRASLAVIRRDEGDARREKLVSLIARFRAGVQDLPFTLADSCSAIQPLIVGDNSRALQLAEKLRQQGCWVTAIRPPTVPAGTARLRLTLTAAHEMQDIDRLLEVLHGNG.

Arginine 21 serves as a coordination point for substrate. 108–109 contacts pyridoxal 5'-phosphate; it reads GF. Position 133 (histidine 133) interacts with substrate. Residues serine 179, histidine 207, and threonine 233 each contribute to the pyridoxal 5'-phosphate site. Lysine 236 is modified (N6-(pyridoxal phosphate)lysine). Threonine 352 contributes to the substrate binding site.

The protein belongs to the class-II pyridoxal-phosphate-dependent aminotransferase family. BioF subfamily. Homodimer. Pyridoxal 5'-phosphate is required as a cofactor.

It carries out the reaction 6-carboxyhexanoyl-[ACP] + L-alanine + H(+) = (8S)-8-amino-7-oxononanoate + holo-[ACP] + CO2. It functions in the pathway cofactor biosynthesis; biotin biosynthesis. Functionally, catalyzes the decarboxylative condensation of pimeloyl-[acyl-carrier protein] and L-alanine to produce 8-amino-7-oxononanoate (AON), [acyl-carrier protein], and carbon dioxide. The chain is 8-amino-7-oxononanoate synthase from Shigella flexneri serotype 5b (strain 8401).